The sequence spans 380 residues: Deoxyguanosinetriphosphate triphosphohydrolase-like protein (380 aa).

The disordered stretch occupies residues 1-28; that stretch reads MYAPYATMPDRSRGRAVPEEESSFRSPF. An HD domain is found at 62-198; it reads RLTHSIEVGQ…AALADDIAYN (137 aa).

The protein belongs to the dGTPase family. Type 2 subfamily.

This Ruegeria sp. (strain TM1040) (Silicibacter sp.) protein is Deoxyguanosinetriphosphate triphosphohydrolase-like protein.